A 775-amino-acid chain; its full sequence is Outer capsid protein VP4 (775 aa).

The tract at residues 65–223 is spike head; the sequence is LDGPYQPTTF…KCNEYINNGL (159 aa). The tract at residues 247 to 478 is spike body and stalk (antigen domain); it reads AQVNEDITIS…LISLVPTNDD (232 aa). The short motif at 307 to 309 is the DGE motif; interaction with ITGA2/ITGB1 heterodimer element; sequence DGE. A disulfide bond links Cys-317 and Cys-379. Residues 388–408 form a hydrophobic; possible role in virus entry into host cell region; sequence LPVGAWPVMNGGAVSLHFAGV. Positions 447 to 449 match the YGL motif; interaction with ITGA4 motif; the sequence is YGL. Residues 483–510 adopt a coiled-coil conformation; sequence IMNSVTVRQDLERQLTDLREEFNSLSQE. The segment at 509-775 is spike foot; the sequence is QEIAMSQLID…IEQLILQCKL (267 aa). The short motif at 643-645 is the KID motif; interaction with HSPA8 element; that stretch reads KID.

Belongs to the rotavirus VP4 family. In terms of assembly, homotrimer. VP4 adopts a dimeric appearance above the capsid surface, while forming a trimeric base anchored inside the capsid layer. Only hints of the third molecule are observed above the capsid surface. It probably performs a series of molecular rearrangements during viral entry. Prior to trypsin cleavage, it is flexible. The priming trypsin cleavage triggers its rearrangement into rigid spikes with approximate two-fold symmetry of their protruding parts. After an unknown second triggering event, cleaved VP4 may undergo another rearrangement, in which two VP5* subunits fold back on themselves and join a third subunit to form a tightly associated trimer, shaped like a folded umbrella. Interacts with VP6. Interacts with VP7. Homotrimer. The trimer is coiled-coil stabilized by its C-terminus, however, its N-terminus, known as antigen domain or 'body', seems to be flexible allowing it to self-associate either as a dimer or a trimer. Proteolytic cleavage by trypsin results in activation of VP4 functions and greatly increases infectivity. The penetration into the host cell is dependent on trypsin treatment of VP4. It produces two peptides, VP5* and VP8* that remain associated with the virion. Cleavage of VP4 by trypsin probably occurs in vivo in the lumen of the intestine prior to infection of enterocytes. Trypsin seems to be incorporated into the three-layered viral particles but remains inactive as long as the viral outer capsid is intact and would only be activated upon the solubilization of the latter.

The protein resides in the virion. It is found in the host rough endoplasmic reticulum. It localises to the host cell membrane. The protein localises to the host cytoplasm. Its subcellular location is the host cytoskeleton. The protein resides in the host endoplasmic reticulum-Golgi intermediate compartment. In terms of biological role, spike-forming protein that mediates virion attachment to the host epithelial cell receptors and plays a major role in cell penetration, determination of host range restriction and virulence. Rotavirus attachment and entry into the host cell probably involves multiple sequential contacts between the outer capsid proteins VP4 and VP7, and the cell receptors. It is subsequently lost, together with VP7, following virus entry into the host cell. Following entry into the host cell, low intracellular or intravesicular Ca(2+) concentration probably causes the calcium-stabilized VP7 trimers to dissociate from the virion. This step is probably necessary for the membrane-disrupting entry step and the release of VP4, which is locked onto the virion by VP7. During the virus exit from the host cell, VP4 seems to be required to target the newly formed virions to the host cell lipid rafts. Functionally, forms the spike 'foot' and 'body' and acts as a membrane permeabilization protein that mediates release of viral particles from endosomal compartments into the cytoplasm. During entry, the part of VP5* that protrudes from the virus folds back on itself and reorganizes from a local dimer to a trimer. This reorganization may be linked to membrane penetration by exposing VP5* hydrophobic region. In integrin-dependent strains, VP5* targets the integrin heterodimer ITGA2/ITGB1 for cell attachment. Forms the head of the spikes and mediates the recognition of specific host cell surface glycans. It is the viral hemagglutinin and an important target of neutralizing antibodies. In sialic acid-dependent strains, VP8* binds to host cell sialic acid, most probably a ganglioside, providing the initial contact. In some other strains, VP8* mediates the attachment to histo-blood group antigens (HBGAs) for viral entry. This chain is Outer capsid protein VP4, found in Homo sapiens (Human).